The chain runs to 727 residues: NADH-ubiquinone oxidoreductase 75 kDa subunit, mitochondrial (727 aa).

A mitochondrion-targeting transit peptide spans 1-23 (MLRIPVRKALVGLSKSPKGCVRT). The 2Fe-2S ferredoxin-type domain occupies 30-108 (NLIEVFVDGQ…GWNILTNSEK (79 aa)). [2Fe-2S] cluster is bound by residues Cys64, Cys75, and Cys78. Residue Lys84 is modified to N6-acetyllysine. [2Fe-2S] cluster is bound at residue Cys92. The 40-residue stretch at 108-147 (KSKKAREGVMELLLANHPLDCPICDQGGECDLQDQSMMFG) folds into the 4Fe-4S His(Cys)3-ligated-type domain. Positions 124, 128, 131, 137, 176, 179, 182, and 226 each coordinate [4Fe-4S] cluster. In terms of domain architecture, 4Fe-4S Mo/W bis-MGD-type spans 245–301 (TRKTESIDVMDAVGSNIVVSTRTGEVMRILPRMHEDINEEWISDKTRFAYDGLKRQR). An N6-acetyllysine mark is found at Lys467, Lys499, and Lys709.

The protein belongs to the complex I 75 kDa subunit family. Core subunit of respiratory chain NADH dehydrogenase (Complex I) which is composed of 45 different subunits. This is the largest subunit of complex I and it is a component of the iron-sulfur (IP) fragment of the enzyme. Complex I associates with ubiquinol-cytochrome reductase complex (Complex III) to form supercomplexes. Interacts with MDM2 and AKAP1. [2Fe-2S] cluster serves as cofactor. [4Fe-4S] cluster is required as a cofactor.

It localises to the mitochondrion inner membrane. The catalysed reaction is a ubiquinone + NADH + 5 H(+)(in) = a ubiquinol + NAD(+) + 4 H(+)(out). Functionally, core subunit of the mitochondrial membrane respiratory chain NADH dehydrogenase (Complex I) which catalyzes electron transfer from NADH through the respiratory chain, using ubiquinone as an electron acceptor. Essential for catalysing the entry and efficient transfer of electrons within complex I. Plays a key role in the assembly and stability of complex I and participates in the association of complex I with ubiquinol-cytochrome reductase complex (Complex III) to form supercomplexes. The chain is NADH-ubiquinone oxidoreductase 75 kDa subunit, mitochondrial (NDUFS1) from Pongo abelii (Sumatran orangutan).